The sequence spans 312 residues: Short chain dehydrogenase pgmD (312 aa).

Positions 46, 47, 171, 207, 211, and 242 each coordinate NADP(+). Residue Tyr207 is the Proton donor of the active site. Residue Lys211 is the Lowers pKa of active site Tyr of the active site.

It belongs to the short-chain dehydrogenases/reductases (SDR) family.

Its pathway is pigment biosynthesis. It participates in secondary metabolite biosynthesis. Its function is as follows. Short chain dehydrogenase; part of the gene cluster that mediates the biosynthesis of pleosporalin A, ascomycone A, as well as a third cryptic naphthoquinone derived pigment, all responsible for the coloration of conidia. Essential for the production of pleosporalin A, but not the 2 other final products. The pathway begins with the biosynthesis of the cyclized heptaketide 3-acetonyl-1,6,8-trihydroxy-2-naphthaldehyde by the NR-PKS pgmA. The C-6 hydroxyl group is further methylated by the O-methyltransferase pgmB to yield fusarubinaldehyde which is in turn oxidized by the cytochrome P450 monooxygenase pgmC at C-9. The C-1 hydroxyl group is then methylated spontaneously. Although pgmE, pgmD and pgmH are essential for the production of pleosporalin A, it is not the case for the 2 other final products and it remains difficult to assign a specific function to each enzyme. PgmF and pgmG seem not to be involved in pigment biosynthesis although they were regulated by the cluster-specific transcription factor pgmR. The protein is Short chain dehydrogenase pgmD of Aspergillus terreus (strain NIH 2624 / FGSC A1156).